The sequence spans 237 residues: Cytosolic-abundant heat soluble protein 1 (237 aa).

2 stretches are compositionally biased toward basic and acidic residues: residues 1–17 and 91–105; these read MPYE…KTEQ and VDMR…EARR. Disordered stretches follow at residues 1-35 and 85-105; these read MPYE…VARE and SGAS…EARR. Residues 98–201 adopt a coiled-coil conformation; sequence KLAEEARRDA…KEALERSRMA (104 aa). CAHS motif regions lie at residues 132 to 150 and 169 to 187; these read YRHQ…LEKQ and QKRE…LDRE. The tract at residues 212 to 237 is disordered; the sequence is AGHTVSGGTTVSSVDKVETVRERKHH. Over residues 226-237 the composition is skewed to basic and acidic residues; sequence DKVETVRERKHH.

This sequence belongs to the Cytosolic-abundant heat soluble protein (CAHS) family.

It localises to the cytoplasm. The protein resides in the nucleus. Functionally, CAHS proteins are cytosolic heat soluble proteins that seem to contribute to the anhydrobiosis in tardigrades, but their specific mechanisms are yet to be identified. It is possible that protection during anhydrobiosis might occur via the stabilization of vitrifying small molecules such as sugars, but not via the direct glass transition of CAHS proteins themselves. The sequence is that of Cytosolic-abundant heat soluble protein 1 from Ramazzottius varieornatus (Water bear).